Reading from the N-terminus, the 89-residue chain is uncharacterized protein (89 aa).

This is an uncharacterized protein from Schizosaccharomyces pombe (strain 972 / ATCC 24843) (Fission yeast).